Reading from the N-terminus, the 481-residue chain is Matrix metalloproteinase-20 (481 aa).

Positions M1–A20 are cleaved as a signal peptide. Residues A21–N105 constitute a propeptide that is removed on maturation. N64 carries an N-linked (GlcNAc...) asparagine glycan. A Cysteine switch motif is present at residues P96–V103. Zn(2+) is bound at residue C98. The Ca(2+) site is built by E162, A163, and D164. Zn(2+) contacts are provided by H174 and D176. Residues D181, G182, R184, and T186 each coordinate Ca(2+). A Zn(2+)-binding site is contributed by H189. E195, G196, G198, and D200 together coordinate Ca(2+). H202 serves as a coordination point for Zn(2+). D204 and E207 together coordinate Ca(2+). A Zn(2+)-binding site is contributed by H224. Residue E225 is part of the active site. Residues H228 and H234 each coordinate Zn(2+). Hemopexin repeat units follow at residues P291–L341, M342–R387, V389–V437, and N438–C481. C294 and C481 are disulfide-bonded. N-linked (GlcNAc...) asparagine glycosylation occurs at N297.

The protein belongs to the peptidase M10A family. Requires Zn(2+) as cofactor. It depends on Ca(2+) as a cofactor. In terms of processing, autoactivates at least at the 105-Asn-|-Tyr-106 site. As to expression, expressed in the enamel organ.

It localises to the secreted. Its subcellular location is the extracellular space. The protein resides in the extracellular matrix. Degrades amelogenin, the major protein component of the enamel matrix and two of the macromolecules characterizing the cartilage extracellular matrix: aggrecan and the cartilage oligomeric matrix protein (COMP). May play a central role in tooth enamel formation. Cleaves aggrecan at the '360-Ser-|-Phe-361' site. In Bos taurus (Bovine), this protein is Matrix metalloproteinase-20 (MMP20).